The primary structure comprises 285 residues: Probable endonuclease 4 (285 aa).

9 residues coordinate Zn(2+): histidine 69, histidine 109, glutamate 145, aspartate 179, histidine 182, histidine 216, aspartate 229, histidine 231, and glutamate 261.

The protein belongs to the AP endonuclease 2 family. Requires Zn(2+) as cofactor.

It catalyses the reaction Endonucleolytic cleavage to 5'-phosphooligonucleotide end-products.. Endonuclease IV plays a role in DNA repair. It cleaves phosphodiester bonds at apurinic or apyrimidinic (AP) sites, generating a 3'-hydroxyl group and a 5'-terminal sugar phosphate. The polypeptide is Probable endonuclease 4 (Salmonella typhi).